A 477-amino-acid polypeptide reads, in one-letter code: MATSALRGLAVAGGGESSESEDDGWEIGYLDRTSQKLKGQMLPIEEKKEKFKKALTTGDVSLVQELLDSGIISVDATFRYGWTPLMYAASVANAELVRVLLDRGANASFEKDKQTILITACSAHGSEEQILKCVELLLSRNADPNVACRRLMTPIMYAARDGHTQVVALLVASGAEVNTQDENGYTALTWAARQGHKSIVLKLLELGANKMLQTKDGKLPSEIAKRNKHHEIFNLLSFTLNPLEGKLQQLTKEETICKILTTDSDRENDHIFSSYAEFGDLEVFLHGLGLEHMTDLLKERDITLRQLLTMREDEFTKNGFASKDQQKILAALKELEVEEIQFGELSEEAKLEISGDEFLNFLLKLNKQCGHLITAVQNIITELPVNSQKIALEWASPQNFTSVCEELVNNVEDLSEEVCNLKDLIQKLQNERENDPTHIPLREEVSTWNSRILKRTAITVCGFGFLLFICKITFQRK.

Residues 1 to 24 (MATSALRGLAVAGGGESSESEDDG) form a disordered region. A phosphoserine mark is found at S17, S18, and S20. 6 ANK repeats span residues 46-76 (EKKEKFKKALTTGDVSLVQELLDSGIISVDA), 80-109 (YGWTPLMYAASVANAELVRVLLDRGANASF), 112-146 (DKQTILITACSAHGSEEQILKCVELLLSRNADPNV), 150-179 (RLMTPIMYAARDGHTQVVALLVASGAEVNT), 183-212 (NGYTALTWAARQGHKSIVLKLLELGANKML), and 216-245 (DGKLPSEIAKRNKHHEIFNLLSFTLNPLEG). Residues 274-336 (SYAEFGDLEV…KILAALKELE (63 aa)) form the SAM domain.

In terms of assembly, interacts with DDX4, PIWIL1, RANBP9 and TDRD1.

It localises to the cytoplasm. Its function is as follows. Plays a central role during spermatogenesis by repressing transposable elements and preventing their mobilization, which is essential for the germline integrity. Acts via the piRNA metabolic process, which mediates the repression of transposable elements during meiosis by forming complexes composed of piRNAs and Piwi proteins and governs the methylation and subsequent repression of transposons. Its association with pi-bodies suggests a participation in the primary piRNAs metabolic process. Required prior to the pachytene stage to facilitate the production of multiple types of piRNAs, including those associated with repeats involved in the regulation of retrotransposons. May act by mediating protein-protein interactions during germ cell maturation. The chain is Ankyrin repeat, SAM and basic leucine zipper domain-containing protein 1 (ASZ1) from Saimiri boliviensis boliviensis (Bolivian squirrel monkey).